A 504-amino-acid chain; its full sequence is 2-methylcitrate dehydratase 2 (504 aa).

Belongs to the PrpD family. Monomer.

The catalysed reaction is (2S,3S)-2-methylcitrate = 2-methyl-cis-aconitate + H2O. It catalyses the reaction citrate = D-threo-isocitrate. It participates in organic acid metabolism; propanoate degradation. It functions in the pathway carbohydrate metabolism; tricarboxylic acid cycle; isocitrate from oxaloacetate: step 1/2. Functionally, involved in the catabolism of short chain fatty acids (SCFA) via the 2-methylcitrate cycle I (propionate degradation route). Catalyzes the dehydration of 2-methylcitrate (2-MC) to yield the cis isomer 2-methyl-aconitate. Could also catalyze the dehydration of citrate and the hydration of cis-aconitate. In Corynebacterium glutamicum (strain ATCC 13032 / DSM 20300 / JCM 1318 / BCRC 11384 / CCUG 27702 / LMG 3730 / NBRC 12168 / NCIMB 10025 / NRRL B-2784 / 534), this protein is 2-methylcitrate dehydratase 2 (prpD2).